The chain runs to 397 residues: Elongation factor Tu (397 aa).

One can recognise a tr-type G domain in the interval 10–207 (KPHVNIGTLG…AVDNNIPDPV (198 aa)). The tract at residues 19–26 (GHVDHGKT) is G1. 19-26 (GHVDHGKT) is a binding site for GTP. T26 contributes to the Mg(2+) binding site. The G2 stretch occupies residues 63-67 (GITIN). The segment at 84-87 (DAPG) is G3. GTP-binding positions include 84 to 88 (DAPGH) and 139 to 142 (NKSD). The segment at 139–142 (NKSD) is G4. The segment at 177–179 (SGL) is G5.

This sequence belongs to the TRAFAC class translation factor GTPase superfamily. Classic translation factor GTPase family. EF-Tu/EF-1A subfamily. Monomer.

The protein resides in the cytoplasm. The enzyme catalyses GTP + H2O = GDP + phosphate + H(+). GTP hydrolase that promotes the GTP-dependent binding of aminoacyl-tRNA to the A-site of ribosomes during protein biosynthesis. The protein is Elongation factor Tu of Leifsonia xyli subsp. xyli (strain CTCB07).